Reading from the N-terminus, the 488-residue chain is Protein nucleotidyltransferase YdiU (488 aa).

ATP-binding residues include glycine 91, glycine 93, arginine 94, lysine 114, aspartate 126, glycine 127, arginine 177, and arginine 184. The Proton acceptor role is filled by aspartate 253. Positions 254 and 263 each coordinate Mg(2+). Aspartate 263 provides a ligand contact to ATP.

This sequence belongs to the SELO family. Mg(2+) is required as a cofactor. The cofactor is Mn(2+).

The catalysed reaction is L-seryl-[protein] + ATP = 3-O-(5'-adenylyl)-L-seryl-[protein] + diphosphate. It carries out the reaction L-threonyl-[protein] + ATP = 3-O-(5'-adenylyl)-L-threonyl-[protein] + diphosphate. It catalyses the reaction L-tyrosyl-[protein] + ATP = O-(5'-adenylyl)-L-tyrosyl-[protein] + diphosphate. The enzyme catalyses L-histidyl-[protein] + UTP = N(tele)-(5'-uridylyl)-L-histidyl-[protein] + diphosphate. The catalysed reaction is L-seryl-[protein] + UTP = O-(5'-uridylyl)-L-seryl-[protein] + diphosphate. It carries out the reaction L-tyrosyl-[protein] + UTP = O-(5'-uridylyl)-L-tyrosyl-[protein] + diphosphate. Functionally, nucleotidyltransferase involved in the post-translational modification of proteins. It can catalyze the addition of adenosine monophosphate (AMP) or uridine monophosphate (UMP) to a protein, resulting in modifications known as AMPylation and UMPylation. The chain is Protein nucleotidyltransferase YdiU from Bacillus cereus (strain ATCC 10987 / NRS 248).